Consider the following 209-residue polypeptide: Peroxynitrite isomerase 2 (209 aa).

Residues 56-62 (GVWRGEG) carry the GXWXGXG motif. Heme b is bound by residues Lys172 and His199.

The protein belongs to the nitrobindin family. As to quaternary structure, homodimer. The cofactor is heme b.

It carries out the reaction peroxynitrite = nitrate. Its pathway is nitrogen metabolism. In terms of biological role, heme-binding protein able to scavenge peroxynitrite and to protect free L-tyrosine against peroxynitrite-mediated nitration, by acting as a peroxynitrite isomerase that converts peroxynitrite to nitrate. Therefore, this protein likely plays a role in peroxynitrite sensing and in the detoxification of reactive nitrogen and oxygen species (RNS and ROS, respectively). Is able to bind nitric oxide (NO) in vitro, but may act as a sensor of peroxynitrite levels in vivo. This Mycolicibacterium vanbaalenii (strain DSM 7251 / JCM 13017 / BCRC 16820 / KCTC 9966 / NRRL B-24157 / PYR-1) (Mycobacterium vanbaalenii) protein is Peroxynitrite isomerase 2.